The primary structure comprises 342 residues: S-adenosylmethionine:tRNA ribosyltransferase-isomerase (342 aa).

This sequence belongs to the QueA family. In terms of assembly, monomer.

Its subcellular location is the cytoplasm. The catalysed reaction is 7-aminomethyl-7-carbaguanosine(34) in tRNA + S-adenosyl-L-methionine = epoxyqueuosine(34) in tRNA + adenine + L-methionine + 2 H(+). Its pathway is tRNA modification; tRNA-queuosine biosynthesis. Its function is as follows. Transfers and isomerizes the ribose moiety from AdoMet to the 7-aminomethyl group of 7-deazaguanine (preQ1-tRNA) to give epoxyqueuosine (oQ-tRNA). The protein is S-adenosylmethionine:tRNA ribosyltransferase-isomerase of Streptococcus pyogenes serotype M2 (strain MGAS10270).